Here is a 247-residue protein sequence, read N- to C-terminus: DNA polymerase sliding clamp (247 aa).

It belongs to the PCNA family. In terms of assembly, homotrimer. The subunits circularize to form a toroid; DNA passes through its center. Replication factor C (RFC) is required to load the toroid on the DNA.

Sliding clamp subunit that acts as a moving platform for DNA processing. Responsible for tethering the catalytic subunit of DNA polymerase and other proteins to DNA during high-speed replication. The polypeptide is DNA polymerase sliding clamp (Natronomonas pharaonis (strain ATCC 35678 / DSM 2160 / CIP 103997 / JCM 8858 / NBRC 14720 / NCIMB 2260 / Gabara) (Halobacterium pharaonis)).